A 1226-amino-acid polypeptide reads, in one-letter code: Double-stranded RNA-specific adenosine deaminase (1226 aa).

The residue at position 26 (Arg26) is an Asymmetric dimethylarginine. One can recognise a Z-binding 1 domain in the interval 133–199 (LSIYQDQEQR…GTPPLWKIAV (67 aa)). The segment at 133–202 (LSIYQDQEQR…PLWKIAVSTQ (70 aa)) is interaction with Z-DNA. 2 disordered regions span residues 208 to 238 (SGVVRPDGHSQGAPNSDPSLEPEDRNSTSVS) and 258 to 286 (GVVRPDSHSQGSPNSDPGLEPEDSNSTSA). Ser285 carries the post-translational modification Phosphoserine. The region spanning 293–357 (FLDMAEIKEK…TTPPIWHLTD (65 aa)) is the Z-binding 2 domain. Residues Lys384 and Lys408 each participate in a glycyl lysine isopeptide (Lys-Gly) (interchain with G-Cter in SUMO2) cross-link. A Glycyl lysine isopeptide (Lys-Gly) (interchain with G-Cter in SUMO); alternate cross-link involves residue Lys418. Residue Lys418 forms a Glycyl lysine isopeptide (Lys-Gly) (interchain with G-Cter in SUMO1); alternate linkage. A Glycyl lysine isopeptide (Lys-Gly) (interchain with G-Cter in SUMO2); alternate cross-link involves residue Lys418. Ser481 is subject to Phosphoserine. One can recognise a DRBM 1 domain in the interval 503 to 571 (NPISGLLEYA…AMKAMTILLE (69 aa)). Residues 574 to 597 (KAKDSGKSEESSHYSTEKESEKTA) are compositionally biased toward basic and acidic residues. Residues 574–610 (KAKDSGKSEESSHYSTEKESEKTAESQTPTPSATSFF) are disordered. A Glycyl lysine isopeptide (Lys-Gly) (interchain with G-Cter in SUMO2) cross-link involves residue Lys580. The span at 600–610 (QTPTPSATSFF) shows a compositional bias: polar residues. Thr601 and Thr603 each carry phosphothreonine. Phosphoserine occurs at positions 614, 629, and 636. In terms of domain architecture, DRBM 2 spans 614–682 (SPVTTLLECM…AEEAMKALHG (69 aa)). The interval 716–725 (IGELVRYLNT) is N-terminal extension of DRBM 3 and constituent of a bi-partite nuclear localization signal. One can recognise a DRBM 3 domain in the interval 726 to 794 (NPVGGLLEYA…ADAALRVLIG (69 aa)). The C-terminal extension of DRBM 3 and constituent of a bi-partite nuclear localization signal stretch occupies residues 795 to 801 (ENEKAER). Thr808 is subject to Phosphothreonine. A phosphoserine mark is found at Ser814, Ser823, and Ser825. A Glycyl lysine isopeptide (Lys-Gly) (interchain with G-Cter in SUMO2) cross-link involves residue Lys875. One can recognise an A to I editase domain in the interval 886-1221 (SLGTGNRCVK…ISKPQEEKNF (336 aa)). Zn(2+) is bound at residue His910. The Proton donor role is filled by Glu912. Positions 966 and 1036 each coordinate Zn(2+).

As to quaternary structure, homodimer. Homodimerization is essential for its catalytic activity. Isoform 5 can form heterodimers with ADARB1/ADAR2. Isoform 1 interacts with ILF2/NF45 and ILF3/NF90. Binding to ILF3/NF90 up-regulates ILF3-mediated gene expression. Isoform 1 and isoform 5 (via DRBM 3 domain) interact with TNPO1. Isoform 5 (via DRBM domains) interacts with XPO5. Isoform 1 and isoform 5 can interact with EIF2AK2/PKR and UPF1. In terms of processing, sumoylation reduces RNA-editing activity. As to expression, ubiquitously expressed, highest levels were found in brain and lung. Isoform 5 is expressed at higher levels in astrocytomas as compared to normal brain tissue and expression increases strikingly with the severity of the tumor, being higher in the most aggressive tumors.

Its subcellular location is the cytoplasm. It is found in the nucleus. It localises to the nucleolus. The catalysed reaction is adenosine in double-stranded RNA + H2O + H(+) = inosine in double-stranded RNA + NH4(+). Catalyzes the hydrolytic deamination of adenosine to inosine in double-stranded RNA (dsRNA) referred to as A-to-I RNA editing. This may affect gene expression and function in a number of ways that include mRNA translation by changing codons and hence the amino acid sequence of proteins since the translational machinery read the inosine as a guanosine; pre-mRNA splicing by altering splice site recognition sequences; RNA stability by changing sequences involved in nuclease recognition; genetic stability in the case of RNA virus genomes by changing sequences during viral RNA replication; and RNA structure-dependent activities such as microRNA production or targeting or protein-RNA interactions. Can edit both viral and cellular RNAs and can edit RNAs at multiple sites (hyper-editing) or at specific sites (site-specific editing). Its cellular RNA substrates include: bladder cancer-associated protein (BLCAP), neurotransmitter receptors for glutamate (GRIA2) and serotonin (HTR2C) and GABA receptor (GABRA3). Site-specific RNA editing of transcripts encoding these proteins results in amino acid substitutions which consequently alters their functional activities. Exhibits low-level editing at the GRIA2 Q/R site, but edits efficiently at the R/G site and HOTSPOT1. Its viral RNA substrates include: hepatitis C virus (HCV), vesicular stomatitis virus (VSV), measles virus (MV), hepatitis delta virus (HDV), and human immunodeficiency virus type 1 (HIV-1). Exhibits either a proviral (HDV, MV, VSV and HIV-1) or an antiviral effect (HCV) and this can be editing-dependent (HDV and HCV), editing-independent (VSV and MV) or both (HIV-1). Impairs HCV replication via RNA editing at multiple sites. Enhances the replication of MV, VSV and HIV-1 through an editing-independent mechanism via suppression of EIF2AK2/PKR activation and function. Stimulates both the release and infectivity of HIV-1 viral particles by an editing-dependent mechanism where it associates with viral RNAs and edits adenosines in the 5'UTR and the Rev and Tat coding sequence. Can enhance viral replication of HDV via A-to-I editing at a site designated as amber/W, thereby changing an UAG amber stop codon to an UIG tryptophan (W) codon that permits synthesis of the large delta antigen (L-HDAg) which has a key role in the assembly of viral particles. However, high levels of ADAR1 inhibit HDV replication. This Homo sapiens (Human) protein is Double-stranded RNA-specific adenosine deaminase (ADAR).